Here is an 89-residue protein sequence, read N- to C-terminus: Phasin PhaP (89 aa).

Helix stretches follow at residues Thr3–Glu26 and Asp39–Gln83.

Homotetramer.

The protein localises to the cellular thylakoid membrane. It localises to the cytoplasm. It participates in biopolymer metabolism; poly-(R)-3-hydroxybutanoate biosynthesis. Its function is as follows. A phasin, it attaches to the polyhydroxybutyrate (PHB) granule surface regulating the number and size of PHB granules within a cell. It probably also acts as a regulator affecting the biosynthetic activity of PHB synthase in vivo. The protein is Phasin PhaP of Synechocystis sp. (strain ATCC 27184 / PCC 6803 / Kazusa).